The sequence spans 314 residues: GTPase Era (314 aa).

The region spanning 21–189 is the Era-type G domain; the sequence is KSGFVGIIGR…QNTLIEQLEP (169 aa). Residues 29–36 are G1; it reads GRPNVGKS. GTP is bound at residue 29-36; sequence GRPNVGKS. The tract at residues 55-59 is G2; it reads QTTRN. The interval 76–79 is G3; that stretch reads DTPG. GTP is bound by residues 76–80 and 138–141; these read DTPGI and NKSD. Positions 138 to 141 are G4; that stretch reads NKSD. Residues 168-170 are G5; that stretch reads FSA. Residues 212–296 form the KH type-2 domain; that stretch reads IREQILQLTR…FLKLFVKVEP (85 aa).

The protein belongs to the TRAFAC class TrmE-Era-EngA-EngB-Septin-like GTPase superfamily. Era GTPase family. In terms of assembly, monomer.

The protein resides in the cytoplasm. Its subcellular location is the cell inner membrane. Its function is as follows. An essential GTPase that binds both GDP and GTP, with rapid nucleotide exchange. Plays a role in 16S rRNA processing and 30S ribosomal subunit biogenesis and possibly also in cell cycle regulation and energy metabolism. The sequence is that of GTPase Era from Crocosphaera subtropica (strain ATCC 51142 / BH68) (Cyanothece sp. (strain ATCC 51142)).